Reading from the N-terminus, the 333-residue chain is Mitochondrial glycine transporter (333 aa).

Solcar repeat units lie at residues 10-93 (SKST…IRQS), 125-209 (LSNT…GKKR), and 235-319 (HAAS…LIRR). Transmembrane regions (helical) follow at residues 16 to 41 (FAAG…TRVQ) and 68 to 94 (GAVP…RQSA). A disordered region spans residues 98-126 (SPLPSSSSSTTTSSSTTTSSSSSSLPKLS). Helical transmembrane passes span 131 to 156 (LLAG…VRYE), 184 to 207 (GYGA…EQGK), 239 to 265 (INFA…KTRI), and 294 to 312 (GLAL…AWTV).

This sequence belongs to the mitochondrial carrier (TC 2.A.29) family. SLC25A38 subfamily.

The protein localises to the mitochondrion inner membrane. The catalysed reaction is glycine(in) = glycine(out). Its function is as follows. Mitochondrial glycine transporter that imports glycine into the mitochondrial matrix. Plays an important role in providing glycine for the first enzymatic step in heme biosynthesis, the condensation of glycine with succinyl-CoA to produce 5-aminolevulinate (ALA) in the mitochondrial matrix. This Chaetomium globosum (strain ATCC 6205 / CBS 148.51 / DSM 1962 / NBRC 6347 / NRRL 1970) (Soil fungus) protein is Mitochondrial glycine transporter.